The sequence spans 387 residues: G-protein coupled receptor homolog R33 (387 aa).

Residues 1–33 (MDVLLGTEELEDELHQLHFNYTCVPSLGLSVAR) lie on the Extracellular side of the membrane. Asn-20 carries N-linked (GlcNAc...) asparagine; by host glycosylation. A helical membrane pass occupies residues 34–61 (DAETAVNFLIVLVGGPMNFLVLATQMLS). The Cytoplasmic segment spans residues 62–71 (NRSYSVSTPT). Residues 72–94 (LYMTNLYLANLLTVATLPFLMLS) form a helical membrane-spanning segment. At 95–107 (NRGLVGSSPEGCK) the chain is on the extracellular side. The chain crosses the membrane as a helical span at residues 108 to 129 (IAALAYYATCTAGFATLMLIAI). At 130 to 150 (NRYRVIHQRTRSGAGSKRQTY) the chain is on the cytoplasmic side. A helical membrane pass occupies residues 151 to 169 (AVLAVTWLASLMCASPAPL). Residues 170-204 (YATVMAHDSADALAFETCIIYFSYDQVKTVLATFK) are Extracellular-facing. The helical transmembrane segment at 205-224 (ILITMIWGITPVVMMSWFYV) threads the bilayer. Topologically, residues 225 to 244 (FFYRRLKLTSYRRRSQTLTF) are cytoplasmic. Residues 245–268 (VTTLMLSFLVVQTPFVAIMSYDSY) traverse the membrane as a helical segment. The Extracellular segment spans residues 269 to 285 (GVLNWPINCDTINKRDA). A helical transmembrane segment spans residues 286-309 (VSMLARVVPNFHCLLNPVLYAFLG). The Cytoplasmic portion of the chain corresponds to 310 to 387 (RDFNKRFILC…PPPPPPPPNC (78 aa)). The segment at 368–387 (RLRALGRPPPPPPPPPPPNC) is disordered. Over residues 374–387 (RPPPPPPPPPPPNC) the composition is skewed to pro residues.

This sequence belongs to the G-protein coupled receptor 1 family.

The protein localises to the host cell membrane. Plays an important role in vivo, in particular in the dissemination to or replication in the salivary gland. The sequence is that of G-protein coupled receptor homolog R33 from Rattus.